Reading from the N-terminus, the 465-residue chain is tRNA modification GTPase MnmE (465 aa).

3 residues coordinate (6S)-5-formyl-5,6,7,8-tetrahydrofolate: arginine 24, glutamate 84, and lysine 127. The TrmE-type G domain maps to 223–383; the sequence is GLNIVLAGQP…LRGELLRLIG (161 aa). Asparagine 233 contacts K(+). GTP contacts are provided by residues 233–238, 252–258, and 277–280; these read NVGKSS, TAIAGTT, and DTAG. Serine 237 is a binding site for Mg(2+). Residues threonine 252, isoleucine 254, and threonine 257 each contribute to the K(+) site. A Mg(2+)-binding site is contributed by threonine 258. Lysine 465 provides a ligand contact to (6S)-5-formyl-5,6,7,8-tetrahydrofolate.

This sequence belongs to the TRAFAC class TrmE-Era-EngA-EngB-Septin-like GTPase superfamily. TrmE GTPase family. As to quaternary structure, homodimer. Heterotetramer of two MnmE and two MnmG subunits. K(+) is required as a cofactor.

It is found in the cytoplasm. Its function is as follows. Exhibits a very high intrinsic GTPase hydrolysis rate. Involved in the addition of a carboxymethylaminomethyl (cmnm) group at the wobble position (U34) of certain tRNAs, forming tRNA-cmnm(5)s(2)U34. This Janthinobacterium sp. (strain Marseille) (Minibacterium massiliensis) protein is tRNA modification GTPase MnmE.